Here is a 323-residue protein sequence, read N- to C-terminus: Elongation factor P--(R)-beta-lysine ligase (323 aa).

Residue 76–78 (SPE) coordinates substrate. ATP-binding positions include 100–102 (RNE) and Asn109. Tyr118 contacts substrate. 242–243 (EL) is a binding site for ATP. Position 249 (Glu249) interacts with substrate. Gly298 is a binding site for ATP.

Belongs to the class-II aminoacyl-tRNA synthetase family. EpmA subfamily. In terms of assembly, homodimer.

It carries out the reaction D-beta-lysine + L-lysyl-[protein] + ATP = N(6)-((3R)-3,6-diaminohexanoyl)-L-lysyl-[protein] + AMP + diphosphate + H(+). Its function is as follows. With EpmB is involved in the beta-lysylation step of the post-translational modification of translation elongation factor P (EF-P). Catalyzes the ATP-dependent activation of (R)-beta-lysine produced by EpmB, forming a lysyl-adenylate, from which the beta-lysyl moiety is then transferred to the epsilon-amino group of a conserved specific lysine residue in EF-P. The sequence is that of Elongation factor P--(R)-beta-lysine ligase from Pasteurella multocida (strain Pm70).